Reading from the N-terminus, the 118-residue chain is uncharacterized protein (118 aa).

The N-terminal stretch at 1–27 (MPIKEPDVWALIWSWLQTNLSSSSAQS) is a signal peptide.

This is an uncharacterized protein from Haemophilus influenzae (strain ATCC 51907 / DSM 11121 / KW20 / Rd).